Consider the following 151-residue polypeptide: MKKIDVKILDPRVGKEFPLPTYATSGSAGLDLRACLDDAVELAPGDSTLVPTGLAIHIADPSLAAMMLPRSGLGHKHGIVLGNLVGLIDSDYQGQLMISVWNRGQDSFTIQPGERIAQMIFVPVVQAEFNLVEDFDATDRGEGGFGHSGRQ.

Residues 70–72 (RSG), N83, 87–89 (LID), and M97 contribute to the substrate site.

Belongs to the dUTPase family. Mg(2+) serves as cofactor.

It catalyses the reaction dUTP + H2O = dUMP + diphosphate + H(+). The protein operates within pyrimidine metabolism; dUMP biosynthesis; dUMP from dCTP (dUTP route): step 2/2. In terms of biological role, this enzyme is involved in nucleotide metabolism: it produces dUMP, the immediate precursor of thymidine nucleotides and it decreases the intracellular concentration of dUTP so that uracil cannot be incorporated into DNA. The sequence is that of Deoxyuridine 5'-triphosphate nucleotidohydrolase from Shigella sonnei (strain Ss046).